The sequence spans 84 residues: Small ribosomal subunit protein bS16 (84 aa).

It belongs to the bacterial ribosomal protein bS16 family.

The sequence is that of Small ribosomal subunit protein bS16 from Dechloromonas aromatica (strain RCB).